A 477-amino-acid chain; its full sequence is Salivary plasminogen activator alpha 1 (477 aa).

An N-terminal signal peptide occupies residues 1–36 (MVNTMKTKLLCVLLLCGAVFSLPRQETYRQLARGSR). Residues 40–82 (VACKDEITQMTYRRQESWLRPEVRSKRVEHCQCDRGQARCHTV) enclose the Fibronectin type-I domain. 14 disulfides stabilise this stretch: cysteine 42-cysteine 72, cysteine 70-cysteine 79, cysteine 87-cysteine 98, cysteine 92-cysteine 109, cysteine 111-cysteine 120, cysteine 128-cysteine 209, cysteine 149-cysteine 191, cysteine 180-cysteine 204, cysteine 214-cysteine 345, cysteine 257-cysteine 273, cysteine 265-cysteine 334, cysteine 359-cysteine 434, cysteine 391-cysteine 407, and cysteine 424-cysteine 452. The 39-residue stretch at 83-121 (PVNSCSEPRCFNGGTCWQAVYFSDFVCQCPAGYTGKRCE) folds into the EGF-like domain. Residues 128-209 (CYEGQGVTYR…TSESCSVPVC (82 aa)) enclose the Kringle domain. A glycan (N-linked (GlcNAc...) asparagine) is linked at asparagine 153. Residues 226–476 (STGGLFTDIT…YLGWIRDNMH (251 aa)) form the Peptidase S1 domain. Catalysis depends on charge relay system residues histidine 272 and aspartate 321. N-linked (GlcNAc...) asparagine glycosylation is present at asparagine 398. The active-site Charge relay system is the serine 428.

The protein belongs to the peptidase S1 family. Monomer.

Its subcellular location is the secreted. The enzyme catalyses Specific cleavage of Arg-|-Val bond in plasminogen to form plasmin.. With respect to regulation, activity toward plasminogen is stimulated in the presence of fibrin I. Its function is as follows. Probably essential to support the feeding habits of this exclusively haematophagous animal. Potent thrombolytic agent. This is Salivary plasminogen activator alpha 1 from Desmodus rotundus (Vampire bat).